A 199-amino-acid chain; its full sequence is dITP/XTP pyrophosphatase (199 aa).

A substrate-binding site is contributed by 7 to 12; sequence TGNKGK. Aspartate 71 functions as the Proton acceptor in the catalytic mechanism. Residue aspartate 71 coordinates Mg(2+). Substrate contacts are provided by residues alanine 72, 154–157, lysine 177, and 182–183; these read FGYD and HR.

This sequence belongs to the HAM1 NTPase family. As to quaternary structure, homodimer. Mg(2+) is required as a cofactor.

It catalyses the reaction XTP + H2O = XMP + diphosphate + H(+). The catalysed reaction is dITP + H2O = dIMP + diphosphate + H(+). The enzyme catalyses ITP + H2O = IMP + diphosphate + H(+). Functionally, pyrophosphatase that catalyzes the hydrolysis of nucleoside triphosphates to their monophosphate derivatives, with a high preference for the non-canonical purine nucleotides XTP (xanthosine triphosphate), dITP (deoxyinosine triphosphate) and ITP. Seems to function as a house-cleaning enzyme that removes non-canonical purine nucleotides from the nucleotide pool, thus preventing their incorporation into DNA/RNA and avoiding chromosomal lesions. The polypeptide is dITP/XTP pyrophosphatase (Bdellovibrio bacteriovorus (strain ATCC 15356 / DSM 50701 / NCIMB 9529 / HD100)).